Here is a 206-residue protein sequence, read N- to C-terminus: Transcription elongation factor A protein-like 5 (206 aa).

Positions 1-26 (MEKLYKENEGKPENERNLESEGKPED) are enriched in basic and acidic residues. Residues 1-206 (MEKLYKENEG…QKDLEDVPYV (206 aa)) are disordered. Over residues 27–42 (EGSTEDEGKSDEEEKP) the composition is skewed to acidic residues. The segment covering 43 to 56 (DMEGKTECEGKRED) has biased composition (basic and acidic residues). Over residues 57 to 70 (EGEPGDEGQLEDEG) the composition is skewed to acidic residues. 4 stretches are compositionally biased toward basic and acidic residues: residues 71-86 (NQEK…KPQS), 102-113 (AAEKRPAEDYVP), 121-160 (DRGT…EELR), and 196-206 (GQKDLEDVPYV).

Belongs to the TFS-II family. TFA subfamily.

Its subcellular location is the nucleus. Functionally, may be involved in transcriptional regulation. This is Transcription elongation factor A protein-like 5 (TCEAL5) from Homo sapiens (Human).